Here is a 251-residue protein sequence, read N- to C-terminus: Ubiquinone/menaquinone biosynthesis C-methyltransferase UbiE (251 aa).

Residues T74, D95, and 123–124 each bind S-adenosyl-L-methionine; that span reads NA.

Belongs to the class I-like SAM-binding methyltransferase superfamily. MenG/UbiE family.

It catalyses the reaction a 2-demethylmenaquinol + S-adenosyl-L-methionine = a menaquinol + S-adenosyl-L-homocysteine + H(+). The catalysed reaction is a 2-methoxy-6-(all-trans-polyprenyl)benzene-1,4-diol + S-adenosyl-L-methionine = a 5-methoxy-2-methyl-3-(all-trans-polyprenyl)benzene-1,4-diol + S-adenosyl-L-homocysteine + H(+). Its pathway is quinol/quinone metabolism; menaquinone biosynthesis; menaquinol from 1,4-dihydroxy-2-naphthoate: step 2/2. The protein operates within cofactor biosynthesis; ubiquinone biosynthesis. Its function is as follows. Methyltransferase required for the conversion of demethylmenaquinol (DMKH2) to menaquinol (MKH2) and the conversion of 2-polyprenyl-6-methoxy-1,4-benzoquinol (DDMQH2) to 2-polyprenyl-3-methyl-6-methoxy-1,4-benzoquinol (DMQH2). In Shewanella baltica (strain OS223), this protein is Ubiquinone/menaquinone biosynthesis C-methyltransferase UbiE.